Here is a 103-residue protein sequence, read N- to C-terminus: Small ribosomal subunit protein uS10 (103 aa).

Belongs to the universal ribosomal protein uS10 family. In terms of assembly, part of the 30S ribosomal subunit.

Involved in the binding of tRNA to the ribosomes. This chain is Small ribosomal subunit protein uS10, found in Shewanella loihica (strain ATCC BAA-1088 / PV-4).